The primary structure comprises 234 residues: Leucyl/phenylalanyl-tRNA--protein transferase (234 aa).

Belongs to the L/F-transferase family.

It localises to the cytoplasm. It carries out the reaction N-terminal L-lysyl-[protein] + L-leucyl-tRNA(Leu) = N-terminal L-leucyl-L-lysyl-[protein] + tRNA(Leu) + H(+). The catalysed reaction is N-terminal L-arginyl-[protein] + L-leucyl-tRNA(Leu) = N-terminal L-leucyl-L-arginyl-[protein] + tRNA(Leu) + H(+). It catalyses the reaction L-phenylalanyl-tRNA(Phe) + an N-terminal L-alpha-aminoacyl-[protein] = an N-terminal L-phenylalanyl-L-alpha-aminoacyl-[protein] + tRNA(Phe). Functionally, functions in the N-end rule pathway of protein degradation where it conjugates Leu, Phe and, less efficiently, Met from aminoacyl-tRNAs to the N-termini of proteins containing an N-terminal arginine or lysine. In Escherichia coli O7:K1 (strain IAI39 / ExPEC), this protein is Leucyl/phenylalanyl-tRNA--protein transferase.